An 83-amino-acid polypeptide reads, in one-letter code: Aminoacyl carrier protein (83 aa).

A Carrier domain is found at 1–80 (MNATIREILA…DTVKLILDGK (80 aa)). Ser35 is subject to O-(pantetheine 4'-phosphoryl)serine.

Post-translationally, 4'-phosphopantetheine is transferred from CoA to a specific serine of the apo-form of this carrier protein.

Aminoacyl carrier protein. Can be charged with L-alanine, L-glycine or L-serine, via the formation of a thioester bond between the amino acid and the 4'-phosphopantetheinyl prosthetic group, catalyzed by the Atu2573 ligase. The sequence is that of Aminoacyl carrier protein from Agrobacterium fabrum (strain C58 / ATCC 33970) (Agrobacterium tumefaciens (strain C58)).